A 598-amino-acid polypeptide reads, in one-letter code: Fructan 6-exohydrolase (598 aa).

The first 30 residues, 1–30 (MAARLPLAACVVAFHLCLLLSSLVRSPSTA), serve as a signal peptide directing secretion. The active site involves D65. N93, N288, and N351 each carry an N-linked (GlcNAc...) asparagine glycan. A disulfide bond links C451 and C497. N572 is a glycosylation site (N-linked (GlcNAc...) asparagine).

Belongs to the glycosyl hydrolase 32 family. In terms of tissue distribution, expressed in leaves, stems, roots and inflorescences. Maximum expression is detected in stems, particularly the penultimate internode.

The catalysed reaction is Hydrolysis of terminal, non-reducing (2-&gt;6)-linked beta-D-fructofuranose residues in fructans.. Its activity is regulated as follows. Not inhibited by sucrose. In terms of biological role, hydrolyzes levan-type beta-(2-&gt;6)-linked fructans to fructose, but not inulin-type beta-(2-&gt;1)-linked fructans. This is Fructan 6-exohydrolase from Triticum aestivum (Wheat).